Reading from the N-terminus, the 360-residue chain is N6-Methyl-AMP deaminase (360 aa).

Positions 23 and 25 each coordinate Zn(2+). N(6)-methyl-AMP contacts are provided by residues histidine 25, asparagine 27, histidine 73, 105–108 (STPR), aspartate 147, and glycine 180. Histidine 207 is a Zn(2+) binding site. Residues glutamate 210, aspartate 292, and aspartate 293 each coordinate N(6)-methyl-AMP. The active-site Proton donor is glutamate 210. Aspartate 292 lines the Zn(2+) pocket.

The protein belongs to the metallo-dependent hydrolases superfamily. Adenosine and AMP deaminases family. In terms of assembly, monomer. The cofactor is Zn(2+).

It catalyses the reaction N(6)-methyl-AMP + H2O + H(+) = IMP + methylamine. Functionally, catalyzes the hydrolysis of the free cytosolic methylated adenosine nucleotide N(6)-methyl-AMP (N6-mAMP) to produce inositol monophosphate (IMP) and methylamine. Is required for the catabolism of cytosolic N6-mAMP, which is derived from the degradation of mRNA containing N6-methylated adenine (m6A). The polypeptide is N6-Methyl-AMP deaminase (Mapda) (Mus musculus (Mouse)).